The primary structure comprises 402 residues: Odorant receptor 22c (402 aa).

The Cytoplasmic portion of the chain corresponds to 1 to 42; it reads MTDSGQPAIADHFYRIPRISGLIVGLWPQRIRGGGGRPWHAH. A helical membrane pass occupies residues 43-63; the sequence is LLFVFAFAMVVVGAVGEVSYG. Topologically, residues 64-73 are extracellular; the sequence is CVHLDNLVVA. A helical transmembrane segment spans residues 74–94; sequence LEAFCPGTTKAVCVLKLWVFF. Residues 95–134 lie on the Cytoplasmic side of the membrane; that stretch reads RSNRRWAELVQRLRAILWESRRQEAQRMLVGLATTANRLS. A helical membrane pass occupies residues 135–155; that stretch reads LLLLSSGTATNAAFTLQPLIM. Residues 156-173 lie on the Extracellular side of the membrane; it reads GLYRWIVQLPGQTELPFN. A helical membrane pass occupies residues 174 to 194; that stretch reads IILPSFAVQPGVFPLTYVLLT. The Cytoplasmic portion of the chain corresponds to 195-201; it reads ASGACTV. Residues 202–222 form a helical membrane-spanning segment; that stretch reads FAFSFVDGFFICSCLYICGAF. At 223–276 the chain is on the extracellular side; sequence RLVQQDIRRIFADLHGDSVDVFTEEMNAEVRHRLAQVVERHNAIIDFCTDLTRQ. The helical transmembrane segment at 277–297 threads the bilayer; that stretch reads FTVIVLMHFLSAAFVLCSTIL. The Cytoplasmic portion of the chain corresponds to 298-307; the sequence is DIMLNTSSLS. Residues 308–328 traverse the membrane as a helical segment; it reads GLTYICYIIAALTQLFLYCFG. Residues 329 to 402 lie on the Extracellular side of the membrane; sequence GNHVSESSAA…SYITLLKTFL (74 aa).

Belongs to the insect chemoreceptor superfamily. Heteromeric odorant receptor channel (TC 1.A.69) family. Or1a subfamily. In terms of assembly, interacts with Orco. Complexes exist early in the endomembrane system in olfactory sensory neurons (OSNs), coupling these complexes to the conserved ciliary trafficking pathway. As to expression, not expressed in either the antenna or maxillary palp.

The protein localises to the cell membrane. Functionally, odorant receptor which mediates acceptance or avoidance behavior, depending on its substrates. The odorant receptor repertoire encodes a large collection of odor stimuli that vary widely in identity, intensity, and duration. May form a complex with Orco to form odorant-sensing units, providing sensitive and prolonged odorant signaling and calcium permeability. In Drosophila melanogaster (Fruit fly), this protein is Odorant receptor 22c (Or22c).